Consider the following 2220-residue polypeptide: Calcineurin-binding protein cabin-1 (2220 aa).

Residues S10 and S11 each carry the phosphoserine modification. Position 12 is a phosphothreonine (T12). S20 and S66 each carry phosphoserine. TPR repeat units lie at residues 36–69 (AFAL…SLLR), 90–123 (YSTY…DSTD), and 125–157 (NLWY…NPDH). The segment at 361–400 (GAPVGDISGGDKSKKGVKRKKISEESGETAKRRSARVRNT) is disordered. The span at 382–391 (ISEESGETAK) shows a compositional bias: basic and acidic residues. 2 positions are modified to phosphoserine: S433 and S450. A TPR 4 repeat occupies 615–648 (VRVYWLKARFLALQGDMEQALENYDICTEMLQSS). S673 bears the Phosphoserine mark. TPR repeat units follow at residues 1055-1088 (NELY…CPNR) and 1106-1139 (KLNS…DSSN). Disordered stretches follow at residues 1299–1476 (FARG…STPT), 1668–1845 (AEGS…RLSR), 1916–2165 (AQRQ…GSIS), and 2197–2220 (VLET…YMDI). The segment covering 1301–1324 (RGEEKNTPKASEKEKACLVDEDSH) has biased composition (basic and acidic residues). Low complexity predominate over residues 1327 to 1349 (AGTLPGPGASLPSSSGPGLTSPP). Positions 1377 to 1397 (DSTAVALSDSSSTQDFFNEPT) are enriched in polar residues. Residues 1402–1412 (GSRKSYTEKRL) are compositionally biased toward basic and acidic residues. S1439 carries the post-translational modification Phosphoserine. The segment covering 1715–1725 (SGPGPEPGGKV) has biased composition (gly residues). Basic and acidic residues-rich tracts occupy residues 1744 to 1753 (SGERKDKESP) and 1784 to 1794 (PARDRGPESRP). Pro residues predominate over residues 1812 to 1823 (PLTPAQPAPAPA). 2 stretches are compositionally biased toward polar residues: residues 1918-1927 (RQASGDTPTT) and 1975-1989 (TIIT…STLD). Phosphothreonine is present on T1924. Positions 2070 to 2081 (GKLRPEPRRDGE) are enriched in basic and acidic residues. Positions 2091–2112 (PLSSPPTAASSKAPSSGSAQPP) are enriched in low complexity. S2094 bears the Phosphoserine mark. Positions 2116-2153 (PGKPEPSRAKSRPLPNMPKLVIPSAATKFPPEITVTPP) are required for interaction with calcineurin. Phosphothreonine occurs at positions 2151 and 2154. The span at 2207-2220 (LESETDEDDDYMDI) shows a compositional bias: acidic residues.

In terms of assembly, component of a complex that includes at least ASF1A, CABIN1, HIRA, histone H3.3 and UBN1. Interacts with calcineurin. Interacts with MEF2B. Activated through PKC-mediated hyperphosphorylation. Phosphorylation by the DNA damage kinases ATM and CHK2 enhances ubiquitination. In terms of processing, upon genotoxic stress, ubiquitination by the DCX(DDB2) E3 ubiquitin-protein ligase complex targets CABIN1 for proteasomal degradation, leading to the release of p53/TP53. Widely expressed in different tissues.

It localises to the nucleus. May be required for replication-independent chromatin assembly. May serve as a negative regulator of T-cell receptor (TCR) signaling via inhibition of calcineurin. Inhibition of activated calcineurin is dependent on both PKC and calcium signals. Acts as a negative regulator of p53/TP53 by keeping p53 in an inactive state on chromatin at promoters of a subset of it's target genes. The sequence is that of Calcineurin-binding protein cabin-1 (CABIN1) from Homo sapiens (Human).